A 269-amino-acid chain; its full sequence is tRNA-cytidine(32) 2-sulfurtransferase (269 aa).

Residues 53 to 58 carry the PP-loop motif motif; that stretch reads SGGKDS. The [4Fe-4S] cluster site is built by Cys-128, Cys-131, and Cys-218.

The protein belongs to the TtcA family. Homodimer. It depends on Mg(2+) as a cofactor. The cofactor is [4Fe-4S] cluster.

The protein resides in the cytoplasm. It catalyses the reaction cytidine(32) in tRNA + S-sulfanyl-L-cysteinyl-[cysteine desulfurase] + AH2 + ATP = 2-thiocytidine(32) in tRNA + L-cysteinyl-[cysteine desulfurase] + A + AMP + diphosphate + H(+). Its pathway is tRNA modification. Catalyzes the ATP-dependent 2-thiolation of cytidine in position 32 of tRNA, to form 2-thiocytidine (s(2)C32). The sulfur atoms are provided by the cysteine/cysteine desulfurase (IscS) system. In Pelobacter propionicus (strain DSM 2379 / NBRC 103807 / OttBd1), this protein is tRNA-cytidine(32) 2-sulfurtransferase.